The primary structure comprises 386 residues: Delta(7)-sterol 5(6)-desaturase ERG3 (386 aa).

3 helical membrane-spanning segments follow: residues 120–140, 172–192, and 206–226; these read LSLF…VAYL, IPVM…GYSF, and AILW…YFLH. In terms of domain architecture, Fatty acid hydroxylase spans 214–337; it reads FILFTDCGIY…FTTLWDRLGN (124 aa). The short motif at 226–230 is the Histidine box-1 element; the sequence is HRWLH. Positions 239 to 243 match the Histidine box-2 motif; that stretch reads HKPHH. Residues 272 to 292 form a helical membrane-spanning segment; it reads PLLFPLHKVLYLFLFTFVNFW. Positions 314–318 match the Histidine box-3 motif; the sequence is HTVHH.

This sequence belongs to the sterol desaturase family. The cofactor is Fe cation.

The protein localises to the endoplasmic reticulum membrane. It carries out the reaction a Delta(7)-sterol + 2 Fe(II)-[cytochrome b5] + O2 + 2 H(+) = a Delta(5),Delta(7)-sterol + 2 Fe(III)-[cytochrome b5] + 2 H2O. The protein operates within steroid metabolism; ergosterol biosynthesis; ergosterol from zymosterol: step 3/5. C-5 sterol desaturase; part of the third module of ergosterol biosynthesis pathway that includes the late steps of the pathwa. ERG3 catalyzes the introduction of a C-5 double bond in the B ring to produce 5-dehydroepisterol. The third module or late pathway involves the ergosterol synthesis itself through consecutive reactions that mainly occur in the endoplasmic reticulum (ER) membrane. Firstly, the squalene synthase ERG9 catalyzes the condensation of 2 farnesyl pyrophosphate moieties to form squalene, which is the precursor of all steroids. Squalene synthase is crucial for balancing the incorporation of farnesyl diphosphate (FPP) into sterol and nonsterol isoprene synthesis. Secondly, the squalene epoxidase ERG1 catalyzes the stereospecific oxidation of squalene to (S)-2,3-epoxysqualene, which is considered to be a rate-limiting enzyme in steroid biosynthesis. Then, the lanosterol synthase ERG7 catalyzes the cyclization of (S)-2,3 oxidosqualene to lanosterol, a reaction that forms the sterol core. In the next steps, lanosterol is transformed to zymosterol through a complex process involving various demethylation, reduction and desaturation reactions. The lanosterol 14-alpha-demethylase ERG11 (also known as CYP51) catalyzes C14-demethylation of lanosterol to produce 4,4'-dimethyl cholesta-8,14,24-triene-3-beta-ol, which is critical for ergosterol biosynthesis. The C-14 reductase ERG24 reduces the C14=C15 double bond of 4,4-dimethyl-cholesta-8,14,24-trienol to produce 4,4-dimethyl-cholesta-8,24-dienol. 4,4-dimethyl-cholesta-8,24-dienol is substrate of the C-4 demethylation complex ERG25-ERG26-ERG27 in which ERG25 catalyzes the three-step monooxygenation required for the demethylation of 4,4-dimethyl and 4alpha-methylsterols, ERG26 catalyzes the oxidative decarboxylation that results in a reduction of the 3-beta-hydroxy group at the C-3 carbon to an oxo group, and ERG27 is responsible for the reduction of the keto group on the C-3. ERG28 has a role as a scaffold to help anchor ERG25, ERG26 and ERG27 to the endoplasmic reticulum and ERG29 regulates the activity of the iron-containing C4-methylsterol oxidase ERG25. Then, the sterol 24-C-methyltransferase ERG6 catalyzes the methyl transfer from S-adenosyl-methionine to the C-24 of zymosterol to form fecosterol. The C-8 sterol isomerase ERG2 catalyzes the reaction which results in unsaturation at C-7 in the B ring of sterols and thus converts fecosterol to episterol. The sterol-C5-desaturase ERG3 then catalyzes the introduction of a C-5 double bond in the B ring to produce 5-dehydroepisterol. The C-22 sterol desaturase ERG5 further converts 5-dehydroepisterol into ergosta-5,7,22,24(28)-tetraen-3beta-ol by forming the C-22(23) double bond in the sterol side chain. Finally, ergosta-5,7,22,24(28)-tetraen-3beta-ol is substrate of the C-24(28) sterol reductase ERG4 to produce ergosterol. This is Delta(7)-sterol 5(6)-desaturase ERG3 from Candida albicans (strain SC5314 / ATCC MYA-2876) (Yeast).